Reading from the N-terminus, the 157-residue chain is UPF0262 protein Atu0536 (157 aa).

Belongs to the UPF0262 family.

The sequence is that of UPF0262 protein Atu0536 from Agrobacterium fabrum (strain C58 / ATCC 33970) (Agrobacterium tumefaciens (strain C58)).